Reading from the N-terminus, the 470-residue chain is Pyruvate kinase I (470 aa).

Arg-32 is a binding site for substrate. 4 residues coordinate K(+): Asn-34, Ser-36, Asp-66, and Thr-67. An ATP-binding site is contributed by 34 to 37 (NFSH). Residues Arg-73 and Lys-156 each coordinate ATP. Glu-222 is a Mg(2+) binding site. Residues Gly-245, Asp-246, and Thr-278 each contribute to the substrate site. Asp-246 provides a ligand contact to Mg(2+).

This sequence belongs to the pyruvate kinase family. As to quaternary structure, homotetramer. Mg(2+) serves as cofactor. The cofactor is K(+).

The enzyme catalyses pyruvate + ATP = phosphoenolpyruvate + ADP + H(+). Its pathway is carbohydrate degradation; glycolysis; pyruvate from D-glyceraldehyde 3-phosphate: step 5/5. The sequence is that of Pyruvate kinase I (pykF) from Salmonella typhi.